A 218-amino-acid polypeptide reads, in one-letter code: Glutathione S-transferase Mu 4 (218 aa).

The GST N-terminal domain maps to 1 to 88 (MPMTLGYWDI…YIARKHNLCG (88 aa)). Residues 7–8 (YW), 46–50 (WLSEK), 59–60 (NL), and 72–73 (QS) each bind glutathione. The GST C-terminal domain maps to 90–208 (TEEEKIRVDI…KTSRFLRTPL (119 aa)). Tyrosine 116 provides a ligand contact to substrate.

This sequence belongs to the GST superfamily. Mu family. Homodimer. In terms of tissue distribution, widely expressed.

It localises to the cytoplasm. The enzyme catalyses RX + glutathione = an S-substituted glutathione + a halide anion + H(+). It carries out the reaction 1-chloro-2,4-dinitrobenzene + glutathione = 2,4-dinitrophenyl-S-glutathione + chloride + H(+). The catalysed reaction is (13S,14S)-epoxy-(4Z,7Z,9E,11E,16Z,19Z)-docosahexaenoate + glutathione = (13R)-S-glutathionyl-(14S)-hydroxy-(4Z,7Z,9E,11E,16Z,19Z)-docosahexaenoate. It catalyses the reaction leukotriene C4 = leukotriene A4 + glutathione. Functionally, conjugation of reduced glutathione to a wide number of exogenous and endogenous hydrophobic electrophiles. Catalyzes the conjugation of leukotriene A4 with reduced glutathione (GSH) to form leukotriene C4. Can also catalyze the transfer of a glutathionyl group from glutathione (GSH) to 13(S),14(S)-epoxy-docosahexaenoic acid to form maresin conjugate in tissue regeneration 1 (MCTR1), a bioactive lipid mediator that possess potent anti-inflammatory and proresolving actions. In Mus musculus (Mouse), this protein is Glutathione S-transferase Mu 4.